The primary structure comprises 159 residues: Ribosomal RNA large subunit methyltransferase H (159 aa).

S-adenosyl-L-methionine contacts are provided by leucine 76 and glycine 108.

Belongs to the RNA methyltransferase RlmH family. In terms of assembly, homodimer.

The protein resides in the cytoplasm. The enzyme catalyses pseudouridine(1915) in 23S rRNA + S-adenosyl-L-methionine = N(3)-methylpseudouridine(1915) in 23S rRNA + S-adenosyl-L-homocysteine + H(+). Specifically methylates the pseudouridine at position 1915 (m3Psi1915) in 23S rRNA. This chain is Ribosomal RNA large subunit methyltransferase H, found in Levilactobacillus brevis (strain ATCC 367 / BCRC 12310 / CIP 105137 / JCM 1170 / LMG 11437 / NCIMB 947 / NCTC 947) (Lactobacillus brevis).